The chain runs to 149 residues: Putative pre-16S rRNA nuclease (149 aa).

The protein belongs to the YqgF nuclease family.

The protein localises to the cytoplasm. Could be a nuclease involved in processing of the 5'-end of pre-16S rRNA. This Pseudoalteromonas translucida (strain TAC 125) protein is Putative pre-16S rRNA nuclease.